A 398-amino-acid polypeptide reads, in one-letter code: 8-amino-7-oxononanoate synthase (398 aa).

Residues R22 and R29 each contribute to the substrate site. A pyridoxal 5'-phosphate-binding site is contributed by 109-110 (GW). H141 serves as a coordination point for substrate. Residues S189, 214–217 (DEAH), and 242–245 (TFSK) each bind pyridoxal 5'-phosphate. At K245 the chain carries N6-(pyridoxal phosphate)lysine. A substrate-binding site is contributed by T359.

This sequence belongs to the class-II pyridoxal-phosphate-dependent aminotransferase family. BioF subfamily. In terms of assembly, homodimer. It depends on pyridoxal 5'-phosphate as a cofactor.

The catalysed reaction is 6-carboxyhexanoyl-[ACP] + L-alanine + H(+) = (8S)-8-amino-7-oxononanoate + holo-[ACP] + CO2. The protein operates within cofactor biosynthesis; biotin biosynthesis. Its function is as follows. Catalyzes the decarboxylative condensation of pimeloyl-[acyl-carrier protein] and L-alanine to produce 8-amino-7-oxononanoate (AON), [acyl-carrier protein], and carbon dioxide. This Gluconacetobacter diazotrophicus (strain ATCC 49037 / DSM 5601 / CCUG 37298 / CIP 103539 / LMG 7603 / PAl5) protein is 8-amino-7-oxononanoate synthase.